The chain runs to 308 residues: Ecto-ADP-ribosyltransferase 5 (308 aa).

Positions 1–23 (MILEDLLMVLSCLALHILWKVQA) are cleaved as a signal peptide. Cysteines 43 and 259 form a disulfide. The TR mART core domain maps to 63–253 (ALLRESWEAA…IVTLWSYNQT (191 aa)). Tyr100 lines the NAD(+) pocket. The N-linked (GlcNAc...) asparagine glycan is linked to Asn102. The NAD(+) site is built by Arg161 and Gln181. Arg161 is an active-site residue. Residue Ser184 is part of the active site. N-linked (GlcNAc...) asparagine glycosylation is present at Asn197. Ser215 contacts NAD(+). Glu222 is an active-site residue. Asn251 carries an N-linked (GlcNAc...) asparagine glycan.

This sequence belongs to the Arg-specific ADP-ribosyltransferase family.

The protein localises to the secreted. It is found in the membrane. The enzyme catalyses L-arginyl-[protein] + NAD(+) = N(omega)-(ADP-D-ribosyl)-L-arginyl-[protein] + nicotinamide + H(+). The polypeptide is Ecto-ADP-ribosyltransferase 5 (Art5) (Rattus norvegicus (Rat)).